We begin with the raw amino-acid sequence, 266 residues long: Dioicin-2 (266 aa).

Disulfide bonds link Cys-32-Cys-263 and Cys-85-Cys-102. Residue Glu-176 is part of the active site.

It localises to the secreted. Its subcellular location is the extracellular space. It is found in the golgi apparatus. The protein resides in the vacuole. The catalysed reaction is Endohydrolysis of the N-glycosidic bond at one specific adenosine on the 28S rRNA.. Its function is as follows. Nicks pBR322 dsDNA. Has adenine polynucleotide glycosidase activity on herring sperm ssDNA. This is Dioicin-2 from Phytolacca dioica (Bella sombra tree).